A 393-amino-acid chain; its full sequence is Major outer membrane porin, serovar D (393 aa).

Residues 1-22 (MKKLLKSVLVFAALSSASSLQA) form the signal peptide.

The protein belongs to the chlamydial porin (CP) (TC 1.B.2) family. In terms of assembly, part of a disulfide cross-linked outer membrane complex (COMC) composed of the major outer membrane porin (MOMP), the small cysteine-rich protein (OmcA) and the large cysteine-rich periplasmic protein (OmcB).

It is found in the cell outer membrane. In elementary bodies (EBs, the infectious stage, which is able to survive outside the host cell) provides the structural integrity of the outer envelope through disulfide cross-links with the small cysteine-rich protein and the large cysteine-rich periplasmic protein. It has been described in publications as the Sarkosyl-insoluble COMC (Chlamydia outer membrane complex), and serves as the functional equivalent of peptidoglycan. Functionally, permits diffusion of specific solutes through the outer membrane. The polypeptide is Major outer membrane porin, serovar D (ompA) (Chlamydia trachomatis serovar D (strain ATCC VR-885 / DSM 19411 / UW-3/Cx)).